Consider the following 425-residue polypeptide: Serine--tRNA ligase (425 aa).

235 to 237 (TAE) lines the L-serine pocket. 266–268 (RSE) lines the ATP pocket. E289 contributes to the L-serine binding site. 353–356 (EISS) serves as a coordination point for ATP. S389 provides a ligand contact to L-serine.

It belongs to the class-II aminoacyl-tRNA synthetase family. Type-1 seryl-tRNA synthetase subfamily. In terms of assembly, homodimer. The tRNA molecule binds across the dimer.

It localises to the cytoplasm. The enzyme catalyses tRNA(Ser) + L-serine + ATP = L-seryl-tRNA(Ser) + AMP + diphosphate + H(+). It carries out the reaction tRNA(Sec) + L-serine + ATP = L-seryl-tRNA(Sec) + AMP + diphosphate + H(+). The protein operates within aminoacyl-tRNA biosynthesis; selenocysteinyl-tRNA(Sec) biosynthesis; L-seryl-tRNA(Sec) from L-serine and tRNA(Sec): step 1/1. Its function is as follows. Catalyzes the attachment of serine to tRNA(Ser). Is also able to aminoacylate tRNA(Sec) with serine, to form the misacylated tRNA L-seryl-tRNA(Sec), which will be further converted into selenocysteinyl-tRNA(Sec). In Desulfotalea psychrophila (strain LSv54 / DSM 12343), this protein is Serine--tRNA ligase.